Here is a 575-residue protein sequence, read N- to C-terminus: Thrombomodulin (575 aa).

Residues 1-18 (MLGVLVLGALALAGLGFP) form the signal peptide. The Extracellular portion of the chain corresponds to 19 to 515 (APAEPQPGGS…TPPAVGLVHS (497 aa)). The C-type lectin domain maps to 31-169 (VEHDCFALYP…VKADGFLCEF (139 aa)). 3 N-linked (GlcNAc...) asparagine glycosylation sites follow: Asn47, Asn115, and Asn116. Cystine bridges form between Cys137–Cys158, Cys245–Cys256, Cys252–Cys265, Cys267–Cys280, Cys288–Cys296, Cys292–Cys308, Cys310–Cys323, Cys329–Cys340, Cys336–Cys349, Cys351–Cys362, Cys369–Cys378, Cys374–Cys388, Cys390–Cys404, Cys408–Cys413, Cys417–Cys425, Cys427–Cys439, Cys445–Cys455, Cys451–Cys464, and Cys466–Cys480. EGF-like domains follow at residues 241-281 (GAWD…RSCT) and 284-324 (ATQS…HRCE). The EGF-like 3; calcium-binding domain occupies 325 to 363 (DVDDCILEPSPCPQRCVNTQGGFECHCYPNYDLVDGECV). Asn342 is modified ((3R)-3-hydroxyasparagine). EGF-like domains follow at residues 365–405 (PVDP…HRCQ) and 404–440 (CQMF…FICT). N-linked (GlcNAc...) asparagine glycosylation occurs at Asn382. Residue Asn409 is glycosylated (N-linked (GlcNAc...) asparagine). The EGF-like 6; calcium-binding domain maps to 441 to 481 (DIDECENGGFCSGVCHNLPGTFECICGPDSALARHIGTDCD). The tract at residues 481 to 515 (DSGKVDGGDSGSGEPPPSPTPGSTLTPPAVGLVHS) is involved in alpha-L/beta-2 and alpha-M/beta-2 integrin binding. Positions 484–506 (KVDGGDSGSGEPPPSPTPGSTLT) are disordered. O-linked (Xyl...) (chondroitin sulfate) serine glycans are attached at residues Ser490 and Ser492. The helical transmembrane segment at 516–539 (GLLIGISIASLCLVVALLALLCHL) threads the bilayer. Residues 540-575 (RKKQGAARAKMEYKCAAPSKEVVLQHVRTERTPQRL) are Cytoplasmic-facing.

Interacts with ITGAL, ITGAM and ITGB2. Interacts with thrombin/F2; this interaction switches the specificity of thrombin from a procoagulant to an anticoagulant and antifibrinolytic protease. Interacts with ANGP1 and ANGP2; these interactions significantly inhibit the generation of activated PC and TAFIa/CPB2 by the thrombin/thrombomodulin complex. Interacts with PF4; this interaction enhances generation of activated protein C. Interacts with HMGB1; this interaction inhibits HMGB1 inflammatory activity. Post-translationally, N-glycosylated. The iron and 2-oxoglutarate dependent 3-hydroxylation of aspartate and asparagine is (R) stereospecific within EGF domains. As to expression, endothelial cells are unique in synthesizing thrombomodulin.

The protein localises to the membrane. In terms of biological role, endothelial cell receptor that plays a critical role in regulating several physiological processes including hemostasis, coagulation, fibrinolysis, inflammation, and angiogenesis. Acts as a cofactor for thrombin activation of protein C/PROC on the surface of vascular endothelial cells leading to initiation of the activated protein C anticoagulant pathway. Also accelerates the activation of the plasma carboxypeptidase B2/CPB2, which catalyzes removal of C-terminal basic amino acids from its substrates including kinins or anaphylatoxins leading to fibrinolysis inhibition. Plays critical protective roles in changing the cleavage specificity of protease-activated receptor 1/PAR1, inhibiting endothelial cell permeability and inflammation. Suppresses inflammation distinctly from its anticoagulant cofactor activity by sequestering HMGB1 thereby preventing it from engaging cellular receptors such as RAGE and contributing to the inflammatory response. The polypeptide is Thrombomodulin (THBD) (Homo sapiens (Human)).